The primary structure comprises 416 residues: MENRGRNPSFLSLLLLLSLFAIASAKVFFEERFEDGWEKRWVKSEWKKDESMAGEWNYTSGKWNGDANDKGIQTSEDYRFYAISAEFPEFSNKDNTLVFQFSVKHEQKLDCGGGYMKLLSGEVDQKKFGGDTPYSIMFGPDICGYSTKKVHAIFNYNDTNHLIKKDVPCETDQLTHVYTFILRPDATYSILIDNQEKQTGSLYTDWDLLPAKKIKDPEAKKPEDWDDKEFIPDPEDKKPEGYDDIPAEITDPEAKKPEDWDDEEDGEWTAPTIPNPEYKGPWKAKKIKNPNYKGKWKAPMIDNPEFKDDPELYVYPKLRYVGVELWQVKSGTLFDNVLVCDDPEYAKQLAEETWGKQKDAEKAAFEELEKKREEEETKDDPVESDAEDEDEAEADDSDKDDADKSDDKDDDQHDEL.

A signal peptide spans 1–25 (MENRGRNPSFLSLLLLLSLFAIASA). The N-linked (GlcNAc...) asparagine glycan is linked to Asn57. An intrachain disulfide couples Cys111 to Cys143. 4 residues coordinate an alpha-D-glucoside: Tyr115, Lys117, Tyr134, and Asp141. Asn157 is a glycosylation site (N-linked (GlcNAc...) asparagine). Tandem repeats lie at residues 197 to 208 (KQTGSLYTDWDL), 216 to 227 (DPEAKKPEDWDD), 233 to 244 (DPEDKKPEGYDD), 251 to 262 (DPEAKKPEDWDD), 266 to 276 (GEWTAPTIPNP), 280 to 290 (GPWKAKKIKNP), and 294 to 304 (GKWKAPMIDNP). The segment at 197–262 (KQTGSLYTDW…EAKKPEDWDD (66 aa)) is 4 X approximate repeats. Residues 217-241 (PEAKKPEDWDDKEFIPDPEDKKPEG) are compositionally biased toward basic and acidic residues. The tract at residues 217–281 (PEAKKPEDWD…TIPNPEYKGP (65 aa)) is disordered. Positions 266–304 (GEWTAPTIPNPEYKGPWKAKKIKNPNYKGKWKAPMIDNP) are 3 X approximate repeats. Glu324 provides a ligand contact to an alpha-D-glucoside. Positions 351–381 (EETWGKQKDAEKAAFEELEKKREEEETKDDP) are enriched in basic and acidic residues. The interval 351–416 (EETWGKQKDA…DKDDDQHDEL (66 aa)) is disordered. Over residues 382 to 400 (VESDAEDEDEAEADDSDKD) the composition is skewed to acidic residues. The span at 401-416 (DADKSDDKDDDQHDEL) shows a compositional bias: basic and acidic residues. The short motif at 413–416 (HDEL) is the Prevents secretion from ER element.

Belongs to the calreticulin family.

It is found in the endoplasmic reticulum lumen. Its function is as follows. Molecular calcium-binding chaperone promoting folding, oligomeric assembly and quality control in the ER via the calreticulin/calnexin cycle. This lectin may interact transiently with almost all of the monoglucosylated glycoproteins that are synthesized in the ER. The protein is Calreticulin of Beta vulgaris (Sugar beet).